A 69-amino-acid chain; its full sequence is uncharacterized protein (69 aa).

The helical transmembrane segment at Met32–Ile54 threads the bilayer.

The protein resides in the membrane. This is an uncharacterized protein from Sinorhizobium fredii (strain NBRC 101917 / NGR234).